The following is a 531-amino-acid chain: O-phosphoserine--tRNA(Cys) ligase (531 aa).

Substrate contacts are provided by residues 189–191, 234–236, 276–277, and Asn319; these read HMT, SAS, and YY.

The protein belongs to the class-II aminoacyl-tRNA synthetase family. O-phosphoseryl-tRNA(Cys) synthetase subfamily. Homotetramer. Interacts with SepCysS.

It catalyses the reaction tRNA(Cys) + O-phospho-L-serine + ATP = O-phospho-L-seryl-tRNA(Cys) + AMP + diphosphate. In terms of biological role, catalyzes the attachment of O-phosphoserine (Sep) to tRNA(Cys). The sequence is that of O-phosphoserine--tRNA(Cys) ligase from Methanospirillum hungatei JF-1 (strain ATCC 27890 / DSM 864 / NBRC 100397 / JF-1).